The sequence spans 34 residues: Photosystem I reaction center subunit XII (34 aa).

Residues 10–32 (IFIALVVAAHAGVLAVRLCVSLY) traverse the membrane as a helical segment.

This sequence belongs to the PsaM family.

It localises to the cellular thylakoid membrane. This chain is Photosystem I reaction center subunit XII, found in Synechococcus sp. (strain WH7803).